A 117-amino-acid polypeptide reads, in one-letter code: UPF0251 protein DET0218 (117 aa).

The protein belongs to the UPF0251 family.

The chain is UPF0251 protein DET0218 from Dehalococcoides mccartyi (strain ATCC BAA-2266 / KCTC 15142 / 195) (Dehalococcoides ethenogenes (strain 195)).